The primary structure comprises 490 residues: Myocilin (490 aa).

The signal sequence occupies residues Met1–Ala18. A coiled-coil region spans residues Ser55–Gln170. Residues Arg168–Glu187 form a disordered region. In terms of domain architecture, Olfactomedin-like spans Gly230 to Lys489. A disulfide bridge links Cys231 with Cys419. Residues Asp366, Asn414, Ala415, Ile463, and Asp464 each coordinate Ca(2+). The short motif at Ser488–Ile490 is the Microbody targeting signal element.

As to quaternary structure, homodimer (via N-terminus). Can also form higher oligomers. Interacts with OLFM3, FN1, NRCAM, GLDN and NFASC. Interacts (via N-terminus) with MYL2. Interacts with SFRP1, FRZB, FZD7, FZD10, FZD1 and WIF1; regulates Wnt signaling. Interacts with SNTA1; regulates muscle hypertrophy. Interacts with ERBB2 and ERBB3; activates ERBB2-ERBB3 signaling pathway. Interacts with SNCG; affects its secretion and its aggregation. Post-translationally, palmitoylated. In terms of processing, glycosylated. Undergoes a calcium-dependent proteolytic cleavage at Arg-212 by CAPN2 in the endoplasmic reticulum. The result is the production of two fragments, one of 35 kDa containing the C-terminal olfactomedin-like domain, and another of 20 kDa containing the N-terminal leucine zipper-like domain. Detected in eye aqueous humor (at protein level).

The protein resides in the secreted. Its subcellular location is the golgi apparatus. The protein localises to the cytoplasmic vesicle. It is found in the extracellular space. It localises to the extracellular matrix. The protein resides in the extracellular exosome. Its subcellular location is the mitochondrion. The protein localises to the mitochondrion intermembrane space. It is found in the mitochondrion inner membrane. It localises to the mitochondrion outer membrane. The protein resides in the rough endoplasmic reticulum. Its subcellular location is the cell projection. The protein localises to the cilium. It is found in the endoplasmic reticulum. Secreted glycoprotein regulating the activation of different signaling pathways in adjacent cells to control different processes including cell adhesion, cell-matrix adhesion, cytoskeleton organization and cell migration. Promotes substrate adhesion, spreading and formation of focal contacts. Negatively regulates cell-matrix adhesion and stress fiber assembly through Rho protein signal transduction. Modulates the organization of actin cytoskeleton by stimulating the formation of stress fibers through interactions with components of Wnt signaling pathways. Promotes cell migration through activation of PTK2 and the downstream phosphatidylinositol 3-kinase signaling. Plays a role in bone formation and promotes osteoblast differentiation in a dose-dependent manner through mitogen-activated protein kinase signaling. Mediates myelination in the peripheral nervous system through ERBB2/ERBB3 signaling. Plays a role as a regulator of muscle hypertrophy through the components of dystrophin-associated protein complex. Involved in positive regulation of mitochondrial depolarization. Plays a role in neurite outgrowth. May participate in the obstruction of fluid outflow in the trabecular meshwork. The chain is Myocilin from Oryctolagus cuniculus (Rabbit).